The following is a 164-amino-acid chain: V-type proton ATPase 16 kDa proteolipid subunit (164 aa).

The Lumenal portion of the chain corresponds to 1-9 (MASFSGDET). Residues 10–32 (APFFGFLGAAAALVFSCMGAAYG) form a helical membrane-spanning segment. At 33-54 (TAKSGVGVASMGVMRPELVMKS) the chain is on the cytoplasmic side. Residues 55–75 (IVPVVMAGVLGIYGLIIAVII) traverse the membrane as a helical segment. The Lumenal segment spans residues 76-94 (STGINPKAKSYYLFDGYAH). A helical transmembrane segment spans residues 95-116 (LSSGLACGLAGLSAGMAIGIVG). Over 117 to 128 (DAGVRANAQQPK) the chain is Cytoplasmic. A helical membrane pass occupies residues 129-154 (LFVGMILILIFAEALALYGLIVGIIL). Over 155–164 (SSRAGQSRAD) the chain is Lumenal.

Belongs to the V-ATPase proteolipid subunit family. As to quaternary structure, V-ATPase is a heteromultimeric enzyme composed of a peripheral catalytic V1 complex (main components: subunits A, B, C, D, E, and F) attached to an integral membrane V0 proton pore complex (main component: the proteolipid protein; which is present as a hexamer that forms the proton-conducting pore).

Its subcellular location is the vacuole membrane. Functionally, proton-conducting pore forming subunit of the membrane integral V0 complex of vacuolar ATPase. V-ATPase is responsible for acidifying a variety of intracellular compartments in eukaryotic cells. The sequence is that of V-type proton ATPase 16 kDa proteolipid subunit from Vigna radiata var. radiata (Mung bean).